A 371-amino-acid polypeptide reads, in one-letter code: 4-hydroxy-3-methylbut-2-en-1-yl diphosphate synthase (flavodoxin) (371 aa).

[4Fe-4S] cluster-binding residues include Cys272, Cys275, Cys307, and Glu314.

It belongs to the IspG family. The cofactor is [4Fe-4S] cluster.

The enzyme catalyses (2E)-4-hydroxy-3-methylbut-2-enyl diphosphate + oxidized [flavodoxin] + H2O + 2 H(+) = 2-C-methyl-D-erythritol 2,4-cyclic diphosphate + reduced [flavodoxin]. It participates in isoprenoid biosynthesis; isopentenyl diphosphate biosynthesis via DXP pathway; isopentenyl diphosphate from 1-deoxy-D-xylulose 5-phosphate: step 5/6. Its function is as follows. Converts 2C-methyl-D-erythritol 2,4-cyclodiphosphate (ME-2,4cPP) into 1-hydroxy-2-methyl-2-(E)-butenyl 4-diphosphate. The polypeptide is 4-hydroxy-3-methylbut-2-en-1-yl diphosphate synthase (flavodoxin) (Pseudomonas paraeruginosa (strain DSM 24068 / PA7) (Pseudomonas aeruginosa (strain PA7))).